The chain runs to 169 residues: MMPFDIRVGQGYDVHALVPGRKLILGGVEIPHDRGLLGHSDADALLHAVTDALFGAAALGDIGRHFPDTDAQFAGADSRVLLREAARRVREAGYEIGNVDATVIAQAPKLAPHIGAMVANLAEDLGIARGRCNVKAKTNEKLGFEGRQEGIVAQAAVLLWRASVGDAQD.

Asp-13 and His-15 together coordinate a divalent metal cation. Residues 13–15 (DVH) and 39–40 (HS) each bind 4-CDP-2-C-methyl-D-erythritol 2-phosphate. His-47 lines the a divalent metal cation pocket. Residues 61–63 (DIG), 66–70 (FPDTD), Phe-144, and Arg-147 contribute to the 4-CDP-2-C-methyl-D-erythritol 2-phosphate site.

It belongs to the IspF family. Homotrimer. It depends on a divalent metal cation as a cofactor.

It carries out the reaction 4-CDP-2-C-methyl-D-erythritol 2-phosphate = 2-C-methyl-D-erythritol 2,4-cyclic diphosphate + CMP. Its pathway is isoprenoid biosynthesis; isopentenyl diphosphate biosynthesis via DXP pathway; isopentenyl diphosphate from 1-deoxy-D-xylulose 5-phosphate: step 4/6. Functionally, involved in the biosynthesis of isopentenyl diphosphate (IPP) and dimethylallyl diphosphate (DMAPP), two major building blocks of isoprenoid compounds. Catalyzes the conversion of 4-diphosphocytidyl-2-C-methyl-D-erythritol 2-phosphate (CDP-ME2P) to 2-C-methyl-D-erythritol 2,4-cyclodiphosphate (ME-CPP) with a corresponding release of cytidine 5-monophosphate (CMP). The chain is 2-C-methyl-D-erythritol 2,4-cyclodiphosphate synthase from Cupriavidus necator (strain ATCC 17699 / DSM 428 / KCTC 22496 / NCIMB 10442 / H16 / Stanier 337) (Ralstonia eutropha).